Here is a 107-residue protein sequence, read N- to C-terminus: Ubiquitin-related modifier 1 (107 aa).

Gly107 carries the post-translational modification 1-thioglycine. Gly107 participates in a covalent cross-link: Glycyl lysine isopeptide (Gly-Lys) (interchain with K-? in acceptor proteins).

Belongs to the URM1 family. C-terminal thiocarboxylation occurs in 2 steps, it is first acyl-adenylated (-COAMP) via the hesA/moeB/thiF part of UBA4, then thiocarboxylated (-COSH) via the rhodanese domain of UBA4.

The protein localises to the cytoplasm. It participates in tRNA modification; 5-methoxycarbonylmethyl-2-thiouridine-tRNA biosynthesis. Functionally, acts as a sulfur carrier required for 2-thiolation of mcm(5)S(2)U at tRNA wobble positions of cytosolic tRNA(Lys), tRNA(Glu) and tRNA(Gln). Serves as sulfur donor in tRNA 2-thiolation reaction by being thiocarboxylated (-COSH) at its C-terminus by the MOCS3 homolog UBA4. The sulfur is then transferred to tRNA to form 2-thiolation of mcm(5)S(2)U. Prior mcm(5) tRNA modification by the elongator complex is required for 2-thiolation. Also acts as a ubiquitin-like protein (UBL) that is covalently conjugated via an isopeptide bond to lysine residues of target proteins such as AHP1. The thiocarboxylated form serves as substrate for conjugation and oxidative stress specifically induces the formation of UBL-protein conjugates. The polypeptide is Ubiquitin-related modifier 1 (Mycosarcoma maydis (Corn smut fungus)).